Consider the following 660-residue polypeptide: Translation factor GUF1, mitochondrial (660 aa).

The transit peptide at 1 to 42 directs the protein to the mitochondrion; sequence MRSCVRTASSVLQSWRAHTVLRNGCPLPSRTLERLPRLARSY. One can recognise a tr-type G domain in the interval 62 to 242; sequence ERYRNFCIVA…AVVEKIPAPV (181 aa). GTP contacts are provided by residues 71–78, 135–139, and 189–192; these read AHVDHGKS, DTPGH, and NKVD.

It belongs to the TRAFAC class translation factor GTPase superfamily. Classic translation factor GTPase family. LepA subfamily.

It is found in the mitochondrion inner membrane. The enzyme catalyses GTP + H2O = GDP + phosphate + H(+). Functionally, promotes mitochondrial protein synthesis. May act as a fidelity factor of the translation reaction, by catalyzing a one-codon backward translocation of tRNAs on improperly translocated ribosomes. Binds to mitochondrial ribosomes in a GTP-dependent manner. The protein is Translation factor GUF1, mitochondrial of Phaeosphaeria nodorum (strain SN15 / ATCC MYA-4574 / FGSC 10173) (Glume blotch fungus).